Consider the following 333-residue polypeptide: tRNA (guanine(37)-N(1))/4-demethylwyosine(37)-methyltransferase Taw22 (333 aa).

S-adenosyl-L-methionine-binding positions include R174, F191, 213-214 (EI), and 243-244 (DV).

Belongs to the class I-like SAM-binding methyltransferase superfamily. TRM5/TYW2 family.

It localises to the cytoplasm. The enzyme catalyses guanosine(37) in tRNA + S-adenosyl-L-methionine = N(1)-methylguanosine(37) in tRNA + S-adenosyl-L-homocysteine + H(+). It carries out the reaction 4-demethylwyosine(37) in tRNA(Phe) + S-adenosyl-L-methionine = isowyosine(37) in tRNA(Phe) + S-adenosyl-L-homocysteine + H(+). Its function is as follows. Catalyzes both the N1-methylation of guanosine and the C7-methylation of 4-demethylwyosine (imG-14) at position 37 in tRNA(Phe). This Pyrococcus abyssi (strain GE5 / Orsay) protein is tRNA (guanine(37)-N(1))/4-demethylwyosine(37)-methyltransferase Taw22.